A 307-amino-acid chain; its full sequence is Oxygen-dependent coproporphyrinogen-III oxidase (307 aa).

Ser-99 lines the substrate pocket. A divalent metal cation contacts are provided by His-103 and His-113. Residue His-113 is the Proton donor of the active site. 115–117 (NVR) contacts substrate. Residues His-152 and His-182 each contribute to the a divalent metal cation site. The interval 247-282 (YVEFNLVFDRGTLFGLQSGGRTESILMSMPPVVNWR) is important for dimerization. 265 to 267 (GGR) contacts substrate.

It belongs to the aerobic coproporphyrinogen-III oxidase family. Homodimer. A divalent metal cation serves as cofactor.

The protein resides in the cytoplasm. The catalysed reaction is coproporphyrinogen III + O2 + 2 H(+) = protoporphyrinogen IX + 2 CO2 + 2 H2O. It participates in porphyrin-containing compound metabolism; protoporphyrin-IX biosynthesis; protoporphyrinogen-IX from coproporphyrinogen-III (O2 route): step 1/1. Functionally, involved in the heme biosynthesis. Catalyzes the aerobic oxidative decarboxylation of propionate groups of rings A and B of coproporphyrinogen-III to yield the vinyl groups in protoporphyrinogen-IX. The polypeptide is Oxygen-dependent coproporphyrinogen-III oxidase (Paraburkholderia xenovorans (strain LB400)).